Here is a 133-residue protein sequence, read N- to C-terminus: Small ribosomal subunit protein uS8 (133 aa).

The protein belongs to the universal ribosomal protein uS8 family. In terms of assembly, part of the 30S ribosomal subunit. Contacts proteins S5 and S12.

In terms of biological role, one of the primary rRNA binding proteins, it binds directly to 16S rRNA central domain where it helps coordinate assembly of the platform of the 30S subunit. The polypeptide is Small ribosomal subunit protein uS8 (Deinococcus deserti (strain DSM 17065 / CIP 109153 / LMG 22923 / VCD115)).